We begin with the raw amino-acid sequence, 626 residues long: (+)-3-carene synthase 1, chloroplastic (626 aa).

The N-terminal 45 residues, 1–45 (MSLISAVPLASSCVSKSLISSVREHKALRRAIATLQMSRPGKSVA), are a transit peptide targeting the chloroplast. Mg(2+) is bound by residues D377, D381, and D529. The DDXXD motif signature appears at 377-381 (DDMYD).

Belongs to the terpene synthase family. Tpsd subfamily. Mg(2+) is required as a cofactor. It depends on Mn(2+) as a cofactor.

It is found in the plastid. The protein localises to the chloroplast. The catalysed reaction is (2E)-geranyl diphosphate = (+)-car-3-ene + diphosphate. The enzyme catalyses (2E)-geranyl diphosphate = terpinolene + diphosphate. Its pathway is terpene metabolism; oleoresin biosynthesis. It functions in the pathway secondary metabolite biosynthesis; terpenoid biosynthesis. Its function is as follows. Monoterpene synthase (TPS) involved in the biosynthesis of monoterpene natural products included in conifer oleoresin secretions and volatile emissions; these compounds contribute to biotic and abiotic stress defense against herbivores and pathogens. Catalyzes the conversion of (2E)-geranyl diphosphate (GPP) to (+)-3-carene and, to a lower extent, to terpinolene. The sequence is that of (+)-3-carene synthase 1, chloroplastic from Pinus banksiana (Jack pine).